Reading from the N-terminus, the 507-residue chain is Cell cycle serine/threonine-protein kinase hsk1 (507 aa).

Ser22 carries the post-translational modification Phosphoserine. One can recognise a Protein kinase domain in the interval 68–433; it reads YRLIEKIGEG…AEEALDHDFL (366 aa). ATP contacts are provided by residues 74 to 82 and Lys129; that span reads IGEGTFSSV. The Proton acceptor role is filled by Asp216. Thr291 is modified (phosphothreonine). The tract at residues 475–507 is disordered; sequence FKEQEETDEPTSLSKRKRSIDEILPNDALQDGA. Ser493 is subject to Phosphoserine.

The protein belongs to the protein kinase superfamily. Ser/Thr protein kinase family. CDC7 subfamily. In terms of assembly, heterodimer with the regulatory subunit him1/dfp1. May form homooligomeric complexes. Interacts with mcm10. In terms of processing, autophosphorylated. Phosphorylated by cds1 in vitro.

It localises to the nucleus. It catalyses the reaction L-seryl-[protein] + ATP = O-phospho-L-seryl-[protein] + ADP + H(+). The catalysed reaction is L-threonyl-[protein] + ATP = O-phospho-L-threonyl-[protein] + ADP + H(+). Phosphorylation of exogenous substrates activated by Dfp1. Required for G1/S transition. Plays a role in DNA replication checkpoint signaling through regulating rad3 and cds1. Involved in the maintenance of mitotic chromosome structures during S phase through regulating the function of rad21. Required for initiation of mitotic DNA replication through phosphorylating mcm2/cdc19. Required for genome integrity. The sequence is that of Cell cycle serine/threonine-protein kinase hsk1 (hsk1) from Schizosaccharomyces pombe (strain 972 / ATCC 24843) (Fission yeast).